The following is a 306-amino-acid chain: NAD-dependent protein deacylase (306 aa).

The region spanning 1-305 (MNKQLKEFQE…PIALKPLIGD (305 aa)) is the Deacetylase sirtuin-type domain. 23 to 42 (GAGLSASSGLPTFRGSQGLW) is a binding site for NAD(+). Residues Tyr67 and Arg70 each contribute to the substrate site. 103–106 (QNVD) contacts NAD(+). The active-site Proton acceptor is His123. The Zn(2+) site is built by Cys131, Cys136, Cys200, and Cys203. NAD(+)-binding positions include 243-245 (GTS), 269-271 (NTD), and Ala291.

Belongs to the sirtuin family. Class III subfamily. Requires Zn(2+) as cofactor.

The protein resides in the mitochondrion. The enzyme catalyses N(6)-malonyl-L-lysyl-[protein] + NAD(+) + H2O = 2''-O-malonyl-ADP-D-ribose + nicotinamide + L-lysyl-[protein]. It catalyses the reaction N(6)-succinyl-L-lysyl-[protein] + NAD(+) + H2O = 2''-O-succinyl-ADP-D-ribose + nicotinamide + L-lysyl-[protein]. It carries out the reaction N(6)-glutaryl-L-lysyl-[protein] + NAD(+) + H2O = 2''-O-glutaryl-ADP-D-ribose + nicotinamide + L-lysyl-[protein]. Its function is as follows. NAD-dependent lysine demalonylase, desuccinylase and deglutarylase that specifically removes malonyl, succinyl and glutaryl groups on target proteins. Has weak NAD-dependent protein deacetylase activity; however this activity may not be physiologically relevant in vivo. This Candida albicans (strain SC5314 / ATCC MYA-2876) (Yeast) protein is NAD-dependent protein deacylase.